Consider the following 513-residue polypeptide: TRAF3-interacting JNK-activating modulator (513 aa).

Disordered stretches follow at residues 1-96 (MISS…GQVS), 130-171 (SSGI…KAEE), and 381-402 (SLQG…QLKK). The Cytoplasmic segment spans residues 1–485 (MISSDSRSSP…QLQVKENELQ (485 aa)). 2 stretches are compositionally biased toward basic and acidic residues: residues 17–31 (ESYE…ETRE) and 69–79 (RNLEEEKKGQA). Residues 266-488 (MKKVLLEMED…VKENELQCGQ (223 aa)) adopt a coiled-coil conformation. The segment covering 386–397 (GEQQSSETQDLQ) has biased composition (polar residues). The helical; Anchor for type IV membrane protein transmembrane segment at 486 to 506 (CGQWLPVLMVVIATALAVFLA) threads the bilayer. The Extracellular portion of the chain corresponds to 507–513 (NKGNLVI).

As to quaternary structure, interacts (via its coiled-coil domain) with TRAF3 (via isoleucine zipper). Interacts with MAP2K1. Interacts with PPP2CA; this interaction targets PPP2CA to the lysosomes. Interacts with MAVS. Interacts with TBK1. Expressed in bone marrow, spleen and thymus. Not detected in heart, kidney and liver.

It is found in the cell membrane. It localises to the golgi apparatus membrane. The protein localises to the lysosome membrane. The protein resides in the mitochondrion outer membrane. In terms of biological role, adapter protein that plays essential roles in both innate and adaptive immunity. Plays a crucial role in the regulation of thymocyte development. Mechanistically, mediates TCR-stimulated activation through recruiting MAP2K1/MEK1 to the Golgi and, thereby, facilitating the interaction of MAP2K1/MEK1 with its activator BRAF. Also plays an essential role in regulatory T-cell stability and function by recruiting the serine-threonine phosphatase catalytic subunit (PPP2CA) to the lysosome, thereby facilitating the interaction of PP2Ac with the mTORC1 component RPTOR and restricting glycolytic metabolism. Positively regulates TLR4 signaling activity in macrophage-mediated inflammation by acting as a molecular clamp to facilitate LPS-induced translocation of TLR4 to lipid rafts. In response to viral infection, facilitates the recruitment of TRAF3 to MAVS within mitochondria leading to IRF3 activation and interferon production. However, participates in the maintenance of immune homeostasis and the prevention of overzealous innate immunity by promoting 'Lys-48'-dependent ubiquitination of TBK1. The sequence is that of TRAF3-interacting JNK-activating modulator (Traf3ip3) from Mus musculus (Mouse).